A 606-amino-acid polypeptide reads, in one-letter code: Chaperone protein DnaK (606 aa).

A Phosphothreonine; by autocatalysis modification is found at T174. A disordered region spans residues Q576 to K606. A compositionally biased stretch (basic and acidic residues) spans A597–K606.

The protein belongs to the heat shock protein 70 family.

Its function is as follows. Acts as a chaperone. The protein is Chaperone protein DnaK of Caldanaerobacter subterraneus subsp. tengcongensis (strain DSM 15242 / JCM 11007 / NBRC 100824 / MB4) (Thermoanaerobacter tengcongensis).